We begin with the raw amino-acid sequence, 367 residues long: Outer membrane porin C (367 aa).

A signal peptide spans 1-21 (MKVKVLSLLVPALLVAGAANA).

The protein belongs to the Gram-negative porin family. As to quaternary structure, homotrimer.

The protein resides in the cell outer membrane. Forms pores that allow passive diffusion of small molecules across the outer membrane. The polypeptide is Outer membrane porin C (ompC) (Escherichia coli O157:H7).